We begin with the raw amino-acid sequence, 437 residues long: 3-deoxy-D-manno-octulosonic acid transferase (437 aa).

A helical; Signal-anchor transmembrane segment spans residues 16 to 36 (VVLVCAFVIALPKLLYKMLVY). The Proton acceptor role is filled by E70. CMP contacts are provided by residues 279–280 (PR), 319–321 (IGL), and 346–349 (NLLE).

The protein belongs to the glycosyltransferase group 1 family. Glycosyltransferase 30 subfamily.

The protein localises to the cell inner membrane. The catalysed reaction is lipid IVA (E. coli) + CMP-3-deoxy-beta-D-manno-octulosonate = alpha-Kdo-(2-&gt;6)-lipid IVA (E. coli) + CMP + H(+). It carries out the reaction alpha-Kdo-(2-&gt;6)-lipid IVA (E. coli) + CMP-3-deoxy-beta-D-manno-octulosonate = alpha-Kdo-(2-&gt;4)-alpha-Kdo-(2-&gt;6)-lipid IVA (E. coli) + CMP + H(+). The enzyme catalyses alpha-Kdo-(2-&gt;4)-alpha-Kdo-(2-&gt;6)-lipid IVA (E. coli) + CMP-3-deoxy-beta-D-manno-octulosonate = alpha-Kdo-(2-&gt;8)-alpha-Kdo-(2-&gt;4)-alpha-Kdo-(2-&gt;6)-lipid IVA (E. coli) + CMP + H(+). It participates in bacterial outer membrane biogenesis; LPS core biosynthesis. Functionally, involved in lipopolysaccharide (LPS) biosynthesis. Catalyzes the transfer of three 3-deoxy-D-manno-octulosonate (Kdo) residues from CMP-Kdo to lipid IV(A), the tetraacyldisaccharide-1,4'-bisphosphate precursor of lipid A. Thus generates the genus-specific LPS epitope of Chlamydia, composed of the trisaccharide alpha-Kdo-(2-&gt;8)-alpha-Kdo-(2-&gt;4)-alpha-Kdo. This is 3-deoxy-D-manno-octulosonic acid transferase (waaA) from Chlamydia pneumoniae (Chlamydophila pneumoniae).